The chain runs to 204 residues: Casparian strip membrane protein 2 (204 aa).

Topologically, residues 1–42 are cytoplasmic; the sequence is MKNESTFIDVPAESSSAMKGKAPLIGVARDHTTSGSGGYNRG. The helical transmembrane segment at 43–63 threads the bilayer; sequence LAIFDFLLRLAAIVAALAAAA. At 64–92 the chain is on the extracellular side; it reads TMGTSDETLPFFTQFLQFEASYDDLPTFQ. Residues 93-113 traverse the membrane as a helical segment; sequence FFVIAMALVGGYLVLSLPISV. Topologically, residues 114 to 125 are cytoplasmic; sequence VTILRPLATAPR. Residues 126 to 146 traverse the membrane as a helical segment; that stretch reads LLLLVLDTGVLALNTAAASSA. Over 147–178 the chain is Extracellular; sequence AAISYLAHSGNQNTNWLPICQQFGDFCQKSSG. A helical membrane pass occupies residues 179–199; sequence AVVSAFVSVVFFTILVVISGV. The Cytoplasmic portion of the chain corresponds to 200–204; that stretch reads ALKRH.

Belongs to the Casparian strip membrane proteins (CASP) family. Homodimer and heterodimers with other CASP proteins. Interacts with CASP1, CASP3 and CASP4.

It localises to the cell membrane. Regulates membrane-cell wall junctions and localized cell wall deposition. Required for establishment of the Casparian strip membrane domain (CSD) and the subsequent formation of Casparian strips, a cell wall modification of the root endodermis that determines an apoplastic barrier between the intraorganismal apoplasm and the extraorganismal apoplasm and prevents lateral diffusion. This chain is Casparian strip membrane protein 2 (CASP2), found in Arabidopsis thaliana (Mouse-ear cress).